We begin with the raw amino-acid sequence, 367 residues long: Oleoyl-acyl carrier protein thioesterase 2, chloroplastic (367 aa).

The transit peptide at 1–48 (MLKLSCNVTDHIHNLFSNSRRIFVPVHRQTRPISCFQLKKEPLRAILS) directs the protein to the chloroplast. Active-site residues include N263, H265, and C300.

This sequence belongs to the acyl-ACP thioesterase family.

It localises to the plastid. Its subcellular location is the chloroplast. It catalyses the reaction (9Z)-octadecenoyl-[ACP] + H2O = (9Z)-octadecenoate + holo-[ACP] + H(+). Its function is as follows. Plays an essential role in chain termination during de novo fatty acid synthesis. Possesses high thioesterase activity for oleoyl-ACP versus other acyl-ACPs. The polypeptide is Oleoyl-acyl carrier protein thioesterase 2, chloroplastic (FATA2) (Arabidopsis thaliana (Mouse-ear cress)).